The following is a 439-amino-acid chain: Hemagglutinin-esterase (439 aa).

The signal sequence occupies residues 1-22; it reads MGRMCIAMAPRTLLLLIGCQLV. The interval 12–132 is esterase domain 1; the sequence is TLLLLIGCQL…DNNKWMGNKA (121 aa). Over 23–407 the chain is Virion surface; sequence FGFNEPINIV…PVCLYDPLPV (385 aa). Ser-45 (nucleophile) is an active-site residue. Cys-49 and Cys-70 are joined by a disulfide. Asn-94 carries an N-linked (GlcNAc...) asparagine; by host glycan. A disulfide bridge links Cys-118 with Cys-167. Residues 133–281 form a receptor binding region; sequence RFYALLYKKM…GNYKAVSLEY (149 aa). Residues Asn-196, Asn-246, Asn-309, and Asn-316 are each glycosylated (N-linked (GlcNAc...) asparagine; by host). 2 disulfides stabilise this stretch: Cys-202–Cys-291 and Cys-210–Cys-264. The tract at residues 282-395 is esterase domain 2; it reads LLTIPSKAIC…HCPTAANIGY (114 aa). An intrachain disulfide couples Cys-322 to Cys-327. N-linked (GlcNAc...) asparagine; by host glycosylation occurs at Asn-331. Residues Asp-342 and His-345 each act as charge relay system in the active site. Asn-360 and Asn-374 each carry an N-linked (GlcNAc...) asparagine; by host glycan. Cys-363 and Cys-387 form a disulfide bridge. Residues 408–428 form a helical membrane-spanning segment; the sequence is ILLGVLLGIAVLIIVFLILYF. Residues 429-439 lie on the Intravirion side of the membrane; sequence MADSSVRLHEA.

Belongs to the influenza type C/coronaviruses hemagglutinin-esterase family. In terms of assembly, homodimer; disulfide-linked. Forms a complex with the M protein in the pre-Golgi. Associates then with S-M complex to form a ternary complex S-M-HE. N-glycosylated in the host RER.

The protein resides in the virion membrane. The protein localises to the host cell membrane. It carries out the reaction N-acetyl-9-O-acetylneuraminate + H2O = N-acetylneuraminate + acetate + H(+). It catalyses the reaction N-acetyl-4-O-acetylneuraminate + H2O = N-acetylneuraminate + acetate + H(+). Structural protein that makes short spikes at the surface of the virus. Contains receptor binding and receptor-destroying activities. Mediates de-O-acetylation of N-acetyl-4-O-acetylneuraminic acid, which is probably the receptor determinant recognized by the virus on the surface of erythrocytes and susceptible cells. This receptor-destroying activity is important for virus release as it probably helps preventing self-aggregation and ensures the efficient spread of the progeny virus from cell to cell. May serve as a secondary viral attachment protein for initiating infection, the spike protein being the major one. May become a target for both the humoral and the cellular branches of the immune system. The protein is Hemagglutinin-esterase of Rat coronavirus (strain 681) (RCV-SDAV).